A 1774-amino-acid chain; its full sequence is Protein TIC 214 (1774 aa).

Transmembrane regions (helical) follow at residues 19–39 (IINSVVVVGLYYGFLTTFSIG), 68–88 (FIAGQLMMFISIYYAPLHLAL), 91–111 (PHTITVLALPYLLFHFFWNNH), 133–153 (VFLNNLIFQLFNHFILPSSML), 176–196 (VGWLIGHILFMKWVGLVLVWI), and 227–247 (IFSILLFITCVYYLGRIPSPI). Residues 254 to 268 (GTSETEERGGTKQDQ) are compositionally biased toward basic and acidic residues. Positions 254 to 275 (GTSETEERGGTKQDQEVSTEEA) are disordered.

Belongs to the TIC214 family. In terms of assembly, part of the Tic complex.

It is found in the plastid. The protein localises to the chloroplast inner membrane. In terms of biological role, involved in protein precursor import into chloroplasts. May be part of an intermediate translocation complex acting as a protein-conducting channel at the inner envelope. The protein is Protein TIC 214 of Aethionema cordifolium (Lebanon stonecress).